The following is a 1100-amino-acid chain: Beta-alanine-activating enzyme (1100 aa).

The segment at 162–181 is disordered; that stretch reads HKVTDREDRVSAESRTPEKE. ATP is bound by residues 197–205, Asp427, Arg441, and Lys526; that span reads TSGTTGTPK. One can recognise a Carrier domain in the interval 552–632; the sequence is EELWGKLQYL…DVYNHIVQAV (81 aa). Ser591 is modified (O-(pantetheine 4'-phosphoryl)serine). Residues 643 to 671 form a disordered region; it reads SYTTKRKFSDADPEEASGKPARLESAWPS. Ser651 carries the phosphoserine modification.

It belongs to the ATP-dependent AMP-binding enzyme family.

Covalently binds beta-alanine in an ATP-dependent manner to form a thioester bond with its phosphopantetheine group and transfers it to an as yet unknown acceptor via an amide bond. May be required for a post-translational protein modification or for post-transcriptional modification of an RNA. This Mus musculus (Mouse) protein is Beta-alanine-activating enzyme (Aasdh).